A 98-amino-acid chain; its full sequence is PqqA binding protein (98 aa).

This sequence belongs to the PqqD family. In terms of assembly, monomer. Interacts with PqqE.

The protein operates within cofactor biosynthesis; pyrroloquinoline quinone biosynthesis. Its function is as follows. Functions as a PqqA binding protein and presents PqqA to PqqE, in the pyrroloquinoline quinone (PQQ) biosynthetic pathway. In Rhizobium meliloti (strain 1021) (Ensifer meliloti), this protein is PqqA binding protein.